A 218-amino-acid chain; its full sequence is uncharacterized protein (218 aa).

Residues 7–123 (RVALADDQPL…ELIDAIRAAA (117 aa)) form the Response regulatory domain. A 4-aspartylphosphate modification is found at D58. One can recognise an HTH luxR-type domain in the interval 150 to 215 (AEELAEPFTK…QAVVFAIRNG (66 aa)). A DNA-binding region (H-T-H motif) is located at residues 174 to 193 (NEDIAEKLFVSESTVKTHVH).

In terms of processing, phosphorylated by YxjM.

It localises to the cytoplasm. Its function is as follows. Probable member of the two-component regulatory system YxjM/YxjL. This is an uncharacterized protein from Bacillus subtilis (strain 168).